We begin with the raw amino-acid sequence, 517 residues long: GMP synthase [glutamine-hydrolyzing] (517 aa).

The Glutamine amidotransferase type-1 domain maps to K11–N202. C88 serves as the catalytic Nucleophile. Catalysis depends on residues H176 and E178. The GMPS ATP-PPase domain occupies W203 to R392. S230–S236 contacts ATP.

As to quaternary structure, homodimer.

It carries out the reaction XMP + L-glutamine + ATP + H2O = GMP + L-glutamate + AMP + diphosphate + 2 H(+). Its pathway is purine metabolism; GMP biosynthesis; GMP from XMP (L-Gln route): step 1/1. Catalyzes the synthesis of GMP from XMP. This chain is GMP synthase [glutamine-hydrolyzing], found in Pediococcus pentosaceus (strain ATCC 25745 / CCUG 21536 / LMG 10740 / 183-1w).